We begin with the raw amino-acid sequence, 180 residues long: MKSIYFVAGLFVMLVQGSWQRSLQDTEEKSRSFSAPQTEPLNDLDQMNEDKRHSQGTFTSDYSKYLDSRRAQDFVQWLMNTKRNKNNIAKRHDEFERHAEGTFTSDVSSYLEGQAAKEFIAWLVKGRGRRDFPEEVAIVEEFRRRHADGSFSDEMNTVLDTLATRDFINWLLQTKITDRK.

Residues 1-20 form the signal peptide; sequence MKSIYFVAGLFVMLVQGSWQ. The tract at residues 26-56 is disordered; sequence TEEKSRSFSAPQTEPLNDLDQMNEDKRHSQG. Phosphoserine is present on S54. The propeptide occupies 84–89; the sequence is NKNNIA. 2 positions are modified to phosphoserine: S105 and S108. An Arginine amide modification is found at R127. Residues 131–145 constitute a propeptide that is removed on maturation; that stretch reads DFPEEVAIVEEFRRR. Phosphoserine occurs at positions 150 and 152.

It belongs to the glucagon family. Post-translationally, proglucagon is post-translationally processed in a tissue-specific manner in pancreatic A cells and intestinal L cells. In pancreatic A cells, the major bioactive hormone is glucagon cleaved by PCSK2/PC2. In the intestinal L cells PCSK1/PC1 liberates GLP-1, GLP-2, glicentin and oxyntomodulin. GLP-1 is further N-terminally truncated by post-translational processing in the intestinal L cells resulting in GLP-1(7-37) GLP-1-(7-36)amide. The C-terminal amidation is neither important for the metabolism of GLP-1 nor for its effects on the endocrine pancreas. Glucagon is secreted in the A cells of the islets of Langerhans. GLP-1, GLP-2, oxyntomodulin and glicentin are secreted from enteroendocrine cells throughout the gastrointestinal tract. GLP-1 and GLP-2 are also secreted in selected neurons in the brain.

Its subcellular location is the secreted. Its function is as follows. Plays a key role in glucose metabolism and homeostasis. Regulates blood glucose by increasing gluconeogenesis and decreasing glycolysis. A counterregulatory hormone of insulin, raises plasma glucose levels in response to insulin-induced hypoglycemia. Plays an important role in initiating and maintaining hyperglycemic conditions in diabetes. In terms of biological role, potent stimulator of glucose-dependent insulin release. Also stimulates insulin release in response to IL6. Plays important roles on gastric motility and the suppression of plasma glucagon levels. May be involved in the suppression of satiety and stimulation of glucose disposal in peripheral tissues, independent of the actions of insulin. Has growth-promoting activities on intestinal epithelium. May also regulate the hypothalamic pituitary axis (HPA) via effects on LH, TSH, CRH, oxytocin, and vasopressin secretion. Increases islet mass through stimulation of islet neogenesis and pancreatic beta cell proliferation. Inhibits beta cell apoptosis. Stimulates intestinal growth and up-regulates villus height in the small intestine, concomitant with increased crypt cell proliferation and decreased enterocyte apoptosis. The gastrointestinal tract, from the stomach to the colon is the principal target for GLP-2 action. Plays a key role in nutrient homeostasis, enhancing nutrient assimilation through enhanced gastrointestinal function, as well as increasing nutrient disposal. Stimulates intestinal glucose transport and decreases mucosal permeability. Functionally, significantly reduces food intake. Inhibits gastric emptying in humans. Suppression of gastric emptying may lead to increased gastric distension, which may contribute to satiety by causing a sensation of fullness. Its function is as follows. May modulate gastric acid secretion and the gastro-pyloro-duodenal activity. May play an important role in intestinal mucosal growth in the early period of life. This Canis lupus familiaris (Dog) protein is Pro-glucagon (GCG).